Here is a 374-residue protein sequence, read N- to C-terminus: MILATTGSTCATLGEMVTVLSIDGGGIKGIIPATILEFLEGQLQEVDNNKDARLADYFDVIGGTSTGGLLTAMITTPNENNRPFAAAKDIVPFYFEHGPHIFNSSGTIFGPMYDGKYLLQVLQEKLGETRVHQALTEVAISSFDIKTNKPVIFTKSNLAKSPELDAKMYDICYSTAAAPIYFPPHYFVTHTSNGDRYEFNLVDGAVATVGDPALLSLSVATRLAQEDPAFSSIKSLDYKQMLLLSLGTGTNSEFDKTYTAEEAAKWGPLRWLLAIQQMTNAASSYMTDYYLSTVFQARHSQNNYLRVQENALTGTTTEMDDASEANMELLVQVGETLLKKPVSKDSPETYEEALKRFAKLLSDRKKLRANKASY.

Residues 1–11 (MILATTGSTCA) form the signal peptide. One can recognise a PNPLA domain in the interval 20–217 (LSIDGGGIKG…TVGDPALLSL (198 aa)). Residues 24 to 29 (GGGIKG) carry the GXGXXG motif. The GXSXG signature appears at 63–67 (GTSTG). The active-site Nucleophile is the Ser65. An N-linked (GlcNAc...) asparagine glycan is attached at Asn103. Residue Asp203 is the Proton acceptor of the active site. The short motif at 203–205 (DGA) is the DGA/G element. Residues 309-372 (ENALTGTTTE…DRKKLRANKA (64 aa)) adopt a coiled-coil conformation.

The protein belongs to the patatin family. Tuber.

Its subcellular location is the vacuole. Functionally, probable lipolytic acyl hydrolase (LAH), an activity which is thought to be involved in the response of tubers to pathogens. This Solanum tuberosum (Potato) protein is Patatin-2-Kuras 1 (pat2-k1).